A 142-amino-acid polypeptide reads, in one-letter code: Large ribosomal subunit protein uL13 (142 aa).

Belongs to the universal ribosomal protein uL13 family. As to quaternary structure, part of the 50S ribosomal subunit.

Its function is as follows. This protein is one of the early assembly proteins of the 50S ribosomal subunit, although it is not seen to bind rRNA by itself. It is important during the early stages of 50S assembly. This is Large ribosomal subunit protein uL13 from Psychrobacter arcticus (strain DSM 17307 / VKM B-2377 / 273-4).